The primary structure comprises 170 residues: ATP synthase subunit b (170 aa).

A helical transmembrane segment spans residues 22–41; it reads ILNWAVVVFGLYKFLPGFLG. A disordered region spans residues 72–98; sequence AKKDLSSAEEKASQIKADSLKRSESIR.

Belongs to the ATPase B chain family. F-type ATPases have 2 components, F(1) - the catalytic core - and F(0) - the membrane proton channel. F(1) has five subunits: alpha(3), beta(3), gamma(1), delta(1), epsilon(1). F(0) has four main subunits: a(1), b(1), b'(1) and c(10-14). The alpha and beta chains form an alternating ring which encloses part of the gamma chain. F(1) is attached to F(0) by a central stalk formed by the gamma and epsilon chains, while a peripheral stalk is formed by the delta, b and b' chains.

It localises to the cellular thylakoid membrane. F(1)F(0) ATP synthase produces ATP from ADP in the presence of a proton or sodium gradient. F-type ATPases consist of two structural domains, F(1) containing the extramembraneous catalytic core and F(0) containing the membrane proton channel, linked together by a central stalk and a peripheral stalk. During catalysis, ATP synthesis in the catalytic domain of F(1) is coupled via a rotary mechanism of the central stalk subunits to proton translocation. In terms of biological role, component of the F(0) channel, it forms part of the peripheral stalk, linking F(1) to F(0). The sequence is that of ATP synthase subunit b from Prochlorococcus marinus (strain MIT 9301).